An 80-amino-acid chain; its full sequence is uncharacterized protein (80 aa).

It to M.leprae U650M.

This is an uncharacterized protein from Mycobacterium bovis (strain ATCC BAA-935 / AF2122/97).